We begin with the raw amino-acid sequence, 130 residues long: Large ribosomal subunit protein bL19 (130 aa).

It belongs to the bacterial ribosomal protein bL19 family.

This protein is located at the 30S-50S ribosomal subunit interface and may play a role in the structure and function of the aminoacyl-tRNA binding site. The protein is Large ribosomal subunit protein bL19 of Burkholderia ambifaria (strain ATCC BAA-244 / DSM 16087 / CCUG 44356 / LMG 19182 / AMMD) (Burkholderia cepacia (strain AMMD)).